The chain runs to 59 residues: MAQIKITLVNSPIGRIPAQRKTVKALGLGKLNSSVVKEGSPAILGMVNSISHLVKVEEA.

This sequence belongs to the universal ribosomal protein uL30 family. As to quaternary structure, part of the 50S ribosomal subunit.

In Lactococcus lactis subsp. lactis (strain IL1403) (Streptococcus lactis), this protein is Large ribosomal subunit protein uL30.